We begin with the raw amino-acid sequence, 572 residues long: Proline--tRNA ligase (572 aa).

This sequence belongs to the class-II aminoacyl-tRNA synthetase family. ProS type 1 subfamily. Homodimer.

It is found in the cytoplasm. The catalysed reaction is tRNA(Pro) + L-proline + ATP = L-prolyl-tRNA(Pro) + AMP + diphosphate. Functionally, catalyzes the attachment of proline to tRNA(Pro) in a two-step reaction: proline is first activated by ATP to form Pro-AMP and then transferred to the acceptor end of tRNA(Pro). As ProRS can inadvertently accommodate and process non-cognate amino acids such as alanine and cysteine, to avoid such errors it has two additional distinct editing activities against alanine. One activity is designated as 'pretransfer' editing and involves the tRNA(Pro)-independent hydrolysis of activated Ala-AMP. The other activity is designated 'posttransfer' editing and involves deacylation of mischarged Ala-tRNA(Pro). The misacylated Cys-tRNA(Pro) is not edited by ProRS. This chain is Proline--tRNA ligase, found in Klebsiella pneumoniae subsp. pneumoniae (strain ATCC 700721 / MGH 78578).